A 315-amino-acid chain; its full sequence is Methionyl-tRNA formyltransferase (315 aa).

113 to 116 (SLLP) contributes to the (6S)-5,6,7,8-tetrahydrofolate binding site.

The protein belongs to the Fmt family.

It catalyses the reaction L-methionyl-tRNA(fMet) + (6R)-10-formyltetrahydrofolate = N-formyl-L-methionyl-tRNA(fMet) + (6S)-5,6,7,8-tetrahydrofolate + H(+). Its function is as follows. Attaches a formyl group to the free amino group of methionyl-tRNA(fMet). The formyl group appears to play a dual role in the initiator identity of N-formylmethionyl-tRNA by promoting its recognition by IF2 and preventing the misappropriation of this tRNA by the elongation apparatus. The sequence is that of Methionyl-tRNA formyltransferase from Shigella sonnei (strain Ss046).